Consider the following 144-residue polypeptide: Large ribosomal subunit protein eL27 (144 aa).

The KOW domain occupies 6-43 (IKPGRLVILLNGKYAGRKAVVIKTFDDATASKSRPYGH).

Belongs to the eukaryotic ribosomal protein eL27 family.

This is Large ribosomal subunit protein eL27 (rpl27) from Dictyostelium discoideum (Social amoeba).